The sequence spans 89 residues: Small ribosomal subunit protein uS15 (89 aa).

Belongs to the universal ribosomal protein uS15 family. As to quaternary structure, part of the 30S ribosomal subunit. Forms a bridge to the 50S subunit in the 70S ribosome, contacting the 23S rRNA.

Functionally, one of the primary rRNA binding proteins, it binds directly to 16S rRNA where it helps nucleate assembly of the platform of the 30S subunit by binding and bridging several RNA helices of the 16S rRNA. Its function is as follows. Forms an intersubunit bridge (bridge B4) with the 23S rRNA of the 50S subunit in the ribosome. The chain is Small ribosomal subunit protein uS15 from Enterobacter sp. (strain 638).